We begin with the raw amino-acid sequence, 303 residues long: Cathepsin B-like CP1 (303 aa).

The signal sequence occupies residues 1–19; that stretch reads MALSLLLAVVCAKPLVSRA. An N-linked (GlcNAc...) asparagine glycan is attached at N41. Intrachain disulfides connect C92–C119, C102–C145, and C138–C181. The active site involves C105. Residues H249 and N270 contribute to the active site.

Belongs to the peptidase C1 family.

Its subcellular location is the vacuole. Thiol protease which is required for parasite excystation and invasion of the proximal small intestine of the human host. The sequence is that of Cathepsin B-like CP1 (CP1) from Giardia intestinalis (Giardia lamblia).